We begin with the raw amino-acid sequence, 494 residues long: Ribitol 5-phosphate transferase FKRP (494 aa).

Topologically, residues 1 to 6 (MRLTRC) are cytoplasmic. Residues 7 to 29 (WAALAAAIILNLLVFFYVSWLQH) form a helical membrane-spanning segment. At 30–494 (QPRNSRARGP…NPALLSLTGG (465 aa)) the chain is on the lumenal side. Residues C168 and C191 are joined by a disulfide bond. Residues N172 and N209 are each glycosylated (N-linked (GlcNAc...) asparagine). Zn(2+) is bound by residues C289, C296, C317, and C318. Positions 289–318 (CSKESARCFGTVAGDTPAYLYEGRWTPPCC) are zinc finger loop. CDP-L-ribitol is bound by residues G345 and R352. CDP-L-ribitol regions lie at residues 359-364 (WDYDVD), 437-438 (QD), and 480-482 (NPE). Mg(2+) contacts are provided by D360, D362, and D364.

Belongs to the LicD transferase family. In terms of assembly, homodimer; disulfide-linked. Forms a complex composed of FKRP, FKTN/fukutin, and RXYLT1/TMEM5. Also exists as large multimeric protein complexes. May interact with the dystrophin-glycoprotein complex (DGC). In terms of processing, N-glycosylated. Expressed in the retina, specifically in the inner segments of the photoreceptors, the outer plexiform layers, inner nuclear layers, and ganglion cell layers (at protein level). Expressed at highest levels in brain, lung, heart, kidney and liver.

Its subcellular location is the golgi apparatus membrane. The protein resides in the secreted. The protein localises to the cell membrane. It is found in the sarcolemma. It localises to the rough endoplasmic reticulum. Its subcellular location is the cytoplasm. The catalysed reaction is 3-O-[Rib-ol-P-3-beta-D-GalNAc-(1-&gt;3)-beta-D-GlcNAc-(1-&gt;4)-(O-6-P-alpha-D-Man)]-Thr-[protein] + CDP-L-ribitol = 3-O-[Rib-ol-P-Rib-ol-P-3-beta-D-GalNAc-(1-&gt;3)-beta-D-GlcNAc-(1-&gt;4)-(O-6-P-alpha-D-Man)]-Thr-[protein] + CMP + H(+). Its pathway is protein modification; protein glycosylation. Its function is as follows. Catalyzes the transfer of CDP-ribitol to ribitol 5-phosphate previously attached by FKTN/fukutin of to the phosphorylated O-mannosyl trisaccharide (N-acetylgalactosamine-beta-3-N-acetylglucosamine-beta-4-(phosphate-6-)mannose), a carbohydrate structure present in alpha-dystroglycan (DAG1). This constitutes the second step in the formation of the ribose 5-phosphate tandem repeat which links the phosphorylated O-mannosyl trisaccharide to the ligand binding moiety composed of repeats of 3-xylosyl-alpha-1,3-glucuronic acid-beta-1. The protein is Ribitol 5-phosphate transferase FKRP of Mus musculus (Mouse).